A 247-amino-acid chain; its full sequence is Transcription factor bHLH92 (247 aa).

The region spanning 85–134 (ERSRRHMLKERTRREKQKQSYLALHSLLPFATKNDKNSIVEKAVDEIAKL) is the bHLH domain.

Homodimer.

It localises to the nucleus. The sequence is that of Transcription factor bHLH92 (BHLH92) from Arabidopsis thaliana (Mouse-ear cress).